Reading from the N-terminus, the 63-residue chain is UPF0337 protein PSPTO_1596 (63 aa).

The interval 20–63 (KQAVGKATDNTKLQAEGKAQELKGEGQQAKGEVKDAVKKGVDKV) is disordered. Positions 50–63 (GEVKDAVKKGVDKV) are enriched in basic and acidic residues.

Belongs to the UPF0337 (CsbD) family.

This chain is UPF0337 protein PSPTO_1596, found in Pseudomonas syringae pv. tomato (strain ATCC BAA-871 / DC3000).